The chain runs to 98 residues: NADH-ubiquinone oxidoreductase chain 4L (98 aa).

A run of 3 helical transmembrane segments spans residues 2 to 22 (PSIS…MLVF), 29 to 49 (SLLC…LTIM), and 61 to 81 (ILLL…LVMM).

Belongs to the complex I subunit 4L family. As to quaternary structure, core subunit of respiratory chain NADH dehydrogenase (Complex I) which is composed of 45 different subunits.

The protein resides in the mitochondrion inner membrane. The enzyme catalyses a ubiquinone + NADH + 5 H(+)(in) = a ubiquinol + NAD(+) + 4 H(+)(out). Core subunit of the mitochondrial membrane respiratory chain NADH dehydrogenase (Complex I) which catalyzes electron transfer from NADH through the respiratory chain, using ubiquinone as an electron acceptor. Part of the enzyme membrane arm which is embedded in the lipid bilayer and involved in proton translocation. The polypeptide is NADH-ubiquinone oxidoreductase chain 4L (MT-ND4L) (Lepilemur seali (Seal's sportive lemur)).